Reading from the N-terminus, the 250-residue chain is NAD-dependent protein deacylase (250 aa).

The region spanning 1 to 248 is the Deacetylase sirtuin-type domain; the sequence is MLGEVSKILA…PKLVEEIRRI (248 aa). Residue 20-39 participates in NAD(+) binding; that stretch reads GAGISAESGIPTFRGKDGLW. 2 residues coordinate substrate: tyrosine 64 and arginine 67. 98 to 101 contacts NAD(+); the sequence is QNVD. The active-site Proton acceptor is the histidine 116. Zn(2+) is bound by residues cysteine 124, cysteine 127, cysteine 150, and cysteine 153. Residues 190 to 192, 216 to 218, and alanine 234 contribute to the NAD(+) site; these read GTS and NIE.

Belongs to the sirtuin family. Class III subfamily. Zn(2+) serves as cofactor.

The protein localises to the cytoplasm. It catalyses the reaction N(6)-acetyl-L-lysyl-[protein] + NAD(+) + H2O = 2''-O-acetyl-ADP-D-ribose + nicotinamide + L-lysyl-[protein]. The catalysed reaction is N(6)-succinyl-L-lysyl-[protein] + NAD(+) + H2O = 2''-O-succinyl-ADP-D-ribose + nicotinamide + L-lysyl-[protein]. Its function is as follows. NAD-dependent lysine deacetylase and desuccinylase that specifically removes acetyl and succinyl groups on target proteins. Modulates the activities of several proteins which are inactive in their acylated form. Deacetylates the N-terminal lysine residue of Alba, the major archaeal chromatin protein and that, in turn, increases Alba's DNA binding affinity, thereby repressing transcription. This is NAD-dependent protein deacylase from Pyrococcus furiosus (strain ATCC 43587 / DSM 3638 / JCM 8422 / Vc1).